We begin with the raw amino-acid sequence, 343 residues long: Cell invasion protein SipD (343 aa).

The tract at residues 1 to 26 (MLNIQNYSASPHPGIVAERPQTPSAS) is disordered. Positions 295–322 (KAQEENMKTTLQTLTQKYSNANSLYDNL) form a coiled coil.

This sequence belongs to the invasin protein D family.

It is found in the secreted. Functionally, required for translocation of effector proteins via the type III secretion system SPI-1, which is essential for an efficient bacterial internalization. Probably acts by modulating the secretion of SipA, SipB, and SipC. The polypeptide is Cell invasion protein SipD (sipD) (Salmonella typhimurium (strain LT2 / SGSC1412 / ATCC 700720)).